The sequence spans 323 residues: Aquaporin-4 (323 aa).

Over 1–36 (MSDRPAARRWGKCGPLCTRESIMVAFKGVWTQTFWK) the chain is Cytoplasmic. S-palmitoyl cysteine attachment occurs at residues cysteine 13 and cysteine 17. A helical membrane pass occupies residues 37–57 (AVTAEFLAMLIFVLLSLGSTI). The Extracellular portion of the chain corresponds to 58-69 (NWGGAEKPLPVD). The helical transmembrane segment at 70 to 89 (MVLISLCFGLSIATMVQCFG) threads the bilayer. Residues 90-93 (HISG) lie on the Cytoplasmic side of the membrane. The segment at residues 94–101 (GHINPAVT) is an intramembrane region (discontinuously helical). Positions 97 to 99 (NPA) match the NPA 1 motif. Topologically, residues 102–115 (VAMVCTRRISIAKS) are cytoplasmic. Serine 111 is subject to Phosphoserine; by PKG. A helical transmembrane segment spans residues 116–136 (VFYIAAQCLGAIIGAGILYLV). Topologically, residues 137 to 155 (TPPSVVGGLGVTTVHGNLS) are extracellular. Asparagine 153 carries an N-linked (GlcNAc...) asparagine glycan. A helical transmembrane segment spans residues 156–176 (AGHGLLVELIITFQLVFTIFA). Residues 177–184 (SCDSKRTD) are Cytoplasmic-facing. Serine 180 is modified (phosphoserine; by PKC). The chain crosses the membrane as a helical span at residues 185–205 (VTGSIALAIGISVAIGHLFAI). A glycan (N-linked (GlcNAc...) asparagine) is linked at asparagine 206. At 206–208 (NYT) the chain is on the extracellular side. The discontinuously helical intramembrane region spans 209-222 (GASMNPARSFGPAV). The NPA 2 signature appears at 213 to 215 (NPA). The Extracellular segment spans residues 223 to 231 (IMGNWENHW). The chain crosses the membrane as a helical span at residues 232–252 (IYWVGPIIGAVLAGGLYEYVF). The Cytoplasmic portion of the chain corresponds to 253–323 (CPDVELKRRF…DPSGEVLSSV (71 aa)). Serine 276 and serine 285 each carry phosphoserine. Phosphothreonine is present on threonine 289. Serine 321 carries the phosphoserine modification.

It belongs to the MIP/aquaporin (TC 1.A.8) family. As to quaternary structure, homotetramer. The tetramers can form oligomeric arrays in membranes. The size of the oligomers differs between tissues and is smaller in skeletal muscle than in brain. Interaction between AQP4 oligomeric arrays in close-by cells can contribute to cell-cell adhesion. Part of a complex containing MLC1, TRPV4, HEPACAM and ATP1B1. In terms of processing, phosphorylation by PKC at Ser-180 reduces conductance by 50%. Phosphorylation by PKG at Ser-111 in response to glutamate increases conductance by 40%. Isoform 2: Palmitoylated on its N-terminal region. Isoform 1: Not palmitoylated. In terms of tissue distribution, detected in brain and lung.

The protein localises to the cell membrane. It is found in the basolateral cell membrane. It localises to the endosome membrane. Its subcellular location is the sarcolemma. The protein resides in the cell projection. It catalyses the reaction H2O(in) = H2O(out). Functionally, forms a water-specific channel. Plays an important role in brain water homeostasis and in glymphatic solute transport. Required for a normal rate of water exchange across the blood brain interface. Required for normal levels of cerebrospinal fluid influx into the brain cortex and parenchyma along paravascular spaces that surround penetrating arteries, and for normal drainage of interstitial fluid along paravenous drainage pathways. Thereby, it is required for normal clearance of solutes from the brain interstitial fluid, including soluble beta-amyloid peptides derived from APP. Plays a redundant role in urinary water homeostasis and urinary concentrating ability. This chain is Aquaporin-4 (AQP4), found in Bos taurus (Bovine).